The following is a 289-amino-acid chain: Ribosomal protein L11 methyltransferase (289 aa).

Positions 142, 163, 185, and 226 each coordinate S-adenosyl-L-methionine.

This sequence belongs to the methyltransferase superfamily. PrmA family.

It localises to the cytoplasm. It carries out the reaction L-lysyl-[protein] + 3 S-adenosyl-L-methionine = N(6),N(6),N(6)-trimethyl-L-lysyl-[protein] + 3 S-adenosyl-L-homocysteine + 3 H(+). Methylates ribosomal protein L11. The sequence is that of Ribosomal protein L11 methyltransferase from Legionella pneumophila (strain Lens).